The following is a 685-amino-acid chain: Keratin, type II cytoskeletal 2 epidermal (685 aa).

Positions 1-20 (MSCQISCKSRRGGGGGGGGG) are disordered. A head region spans residues 1–196 (MSCQISCKSR…DPEIQNVKSQ (196 aa)). The residue at position 22 (arginine 22) is an Asymmetric dimethylarginine. Phosphoserine occurs at positions 25 and 28. Position 52 is an omega-N-methylarginine (arginine 52). Serine 64 bears the Phosphoserine mark. Residues 197 to 232 (EREQIKTLNNKFASFIDTVRFLEQQNQVLHTKWELL) form a coil 1A region. Residues 197–511 (EREQIKTLNN…KLLEGEECRM (315 aa)) form the IF rod domain. Residues 233–251 (QQLDVGTRTTNLDPVFQAY) are linker 1. The coil 1B stretch occupies residues 252 to 343 (IGILKKQVDR…TLYDTELSQL (92 aa)). The tract at residues 344 to 367 (QQNVTDTNVILSMDNNRNLDLDSI) is linker 12. Positions 368-507 (IAEVQSQYEI…ATYRKLLEGE (140 aa)) are coil 2. Residues 508 to 685 (ECRMSGDFSD…CGSGVTFSFR (178 aa)) form a tail region. Positions 532–685 (VASKAGFGSG…CGSGVTFSFR (154 aa)) are disordered. Residues 538–678 (FGSGGQSSGG…GSGSGEGCGS (141 aa)) show a composition bias toward gly residues. Omega-N-methylarginine is present on residues arginine 554, arginine 588, arginine 603, and arginine 653.

This sequence belongs to the intermediate filament family. As to quaternary structure, heterotetramer of two type I and two type II keratins. Associates with KRT10.

Its subcellular location is the cytoplasm. Its function is as follows. Probably contributes to terminal cornification. Associated with keratinocyte activation, proliferation and keratinization. Required for maintenance of corneocytes and keratin filaments in suprabasal keratinocytes in the epidermis of the ear, potentially via moderation of expression and localization of keratins and their partner proteins. Plays a role in the establishment of the epidermal barrier on plantar skin. In Rattus norvegicus (Rat), this protein is Keratin, type II cytoskeletal 2 epidermal.